Here is a 229-residue protein sequence, read N- to C-terminus: Transmembrane protein 182 (229 aa).

The first 26 residues, 1–26 (MRLNVAVFFGALFGALGVLLFLVAFG), serve as a signal peptide directing secretion. Residues 27 to 114 (SDYWLLATEV…SYDSAIIYRG (88 aa)) lie on the Extracellular side of the membrane. A glycan (N-linked (GlcNAc...) asparagine) is linked at Asn-47. Residues 49-59 (TFHHEGFFWRC) form an interaction with ITGB1 region. 3 N-linked (GlcNAc...) asparagine glycosylation sites follow: Asn-68, Asn-85, and Asn-102. The chain crosses the membrane as a helical span at residues 115 to 135 (FWAVLLLLGVVAALTASFLII). Topologically, residues 136 to 153 (CAAPFSSHFLYKAGGGSY) are cytoplasmic. A helical membrane pass occupies residues 154–174 (IASGVLFSLVVILYVIWVQAV). Residues 175 to 200 (ADMESYRALRMRDCWEFTPSILYGWS) lie on the Extracellular side of the membrane. A helical transmembrane segment spans residues 201–221 (FFLAPAGVFFSLLAGLLFLVV). Residues 222-229 (GRHIQIHH) are Cytoplasmic-facing.

It belongs to the TMEM182 family. Interacts with ITGB1. In terms of tissue distribution, highly expressed in white adipose tissues (WAT), with 10-fold to 20-fold higher levels than in brown adipose tissue (BAT). Also expressed in skeletal muscle, heart and lung. Lower relative levels of expression in kidney, spleen, testis, brain and liver.

It localises to the cell membrane. In terms of biological role, negatively regulates myogenesis and skeletal muscle regeneration via its association with ITGB1. Modulates ITGB1 activation by decreasing ITGB1-LAMB1 interaction and inhibiting ITGB1-mediated intracellular signaling during myogenesis. This chain is Transmembrane protein 182 (Tmem182), found in Mus musculus (Mouse).